A 108-amino-acid chain; its full sequence is Nucleoid-associated protein Csal_1459 (108 aa).

Positions 84–93 (EETSRGRMEE) are enriched in basic and acidic residues. Positions 84–108 (EETSRGRMEEATEGMNLPPGFKMPF) are disordered.

It belongs to the YbaB/EbfC family. As to quaternary structure, homodimer.

It localises to the cytoplasm. Its subcellular location is the nucleoid. Functionally, binds to DNA and alters its conformation. May be involved in regulation of gene expression, nucleoid organization and DNA protection. This is Nucleoid-associated protein Csal_1459 from Chromohalobacter salexigens (strain ATCC BAA-138 / DSM 3043 / CIP 106854 / NCIMB 13768 / 1H11).